A 794-amino-acid polypeptide reads, in one-letter code: Ribonucleoside-diphosphate reductase large subunit (794 aa).

The ATP-cone domain maps to 1-92 (MHVIKRDGGQ…VSNLHKETKK (92 aa)). ATP-binding positions include 5–6 (KR), 11–17 (EGVMFDK), Thr53, and Asp57. Residues Ser202 and Ser217 each contribute to the GDP site. Cys218 and Cys444 are disulfide-bonded. DTTP is bound by residues 226-228 (DSI), Lys243, Arg256, and 263-264 (AG). Residue Asn427 participates in GDP binding. Asn427 acts as the Proton acceptor in catalysis. The active-site Cysteine radical intermediate is Cys429. GDP-binding positions include Glu431 and 604 to 607 (TAST). Glu431 (proton acceptor) is an active-site residue.

This sequence belongs to the ribonucleoside diphosphate reductase large chain family. In terms of assembly, heterodimer of a large and a small subunit.

The protein resides in the cytoplasm. The enzyme catalyses a 2'-deoxyribonucleoside 5'-diphosphate + [thioredoxin]-disulfide + H2O = a ribonucleoside 5'-diphosphate + [thioredoxin]-dithiol. With respect to regulation, under complex allosteric control mediated by deoxynucleoside triphosphates and ATP binding to separate specificity and activation sites on the M1 subunit. The type of nucleotide bound at the specificity site determines substrate preference. It seems probable that ATP makes the enzyme reduce CDP and UDP, dGTP favors ADP reduction and dTTP favors GDP reduction. Stimulated by ATP and inhibited by dATP binding to the activity site. In terms of biological role, provides the precursors necessary for DNA synthesis. Catalyzes the biosynthesis of deoxyribonucleotides from the corresponding ribonucleotides. The chain is Ribonucleoside-diphosphate reductase large subunit (rrm1) from Danio rerio (Zebrafish).